The following is a 161-amino-acid chain: Regulator of ribonuclease activity A (161 aa).

It belongs to the RraA family. As to quaternary structure, homotrimer. Binds to both RNA-binding sites in the C-terminal region of Rne and to RhlB.

Its subcellular location is the cytoplasm. Functionally, globally modulates RNA abundance by binding to RNase E (Rne) and regulating its endonucleolytic activity. Can modulate Rne action in a substrate-dependent manner by altering the composition of the degradosome. Modulates RNA-binding and helicase activities of the degradosome. The sequence is that of Regulator of ribonuclease activity A from Shigella boydii serotype 18 (strain CDC 3083-94 / BS512).